Reading from the N-terminus, the 205-residue chain is Guanylate kinase (205 aa).

The Guanylate kinase-like domain maps to 7–185 (GNIFIISAAS…AEEDLRHIVN (179 aa)). 14 to 21 (AASGTGKT) contributes to the ATP binding site.

This sequence belongs to the guanylate kinase family.

It is found in the cytoplasm. It carries out the reaction GMP + ATP = GDP + ADP. Functionally, essential for recycling GMP and indirectly, cGMP. This is Guanylate kinase (gmk) from Neisseria meningitidis serogroup A / serotype 4A (strain DSM 15465 / Z2491).